The sequence spans 294 residues: Probable 3-hydroxyisobutyrate dehydrogenase (294 aa).

Residues Thr3–Asp31 and Thr93 contribute to the NAD(+) site. The active site involves Lys168. Lys243 serves as a coordination point for NAD(+).

The protein belongs to the HIBADH-related family.

It catalyses the reaction 3-hydroxy-2-methylpropanoate + NAD(+) = 2-methyl-3-oxopropanoate + NADH + H(+). It functions in the pathway amino-acid degradation; L-valine degradation. The sequence is that of Probable 3-hydroxyisobutyrate dehydrogenase (mmsB) from Mycobacterium bovis (strain ATCC BAA-935 / AF2122/97).